The chain runs to 203 residues: TATA-binding protein 2 (203 aa).

2 consecutive repeat copies span residues 28–104 (LQNI…ARII) and 118–195 (IQNI…YPVL).

This sequence belongs to the TBP family. Belongs to the TFIID complex together with the TBP-associated factors (TAFs). Binds DNA as monomer. Interacts with RF2A and TFIIB. Interacts with CWZF7.

The protein localises to the nucleus. General transcription factor that functions at the core of the DNA-binding multiprotein factor TFIID. Binding of TFIID to the TATA box is the initial transcriptional step of the pre-initiation complex (PIC), playing a role in the activation of eukaryotic genes transcribed by RNA polymerase II. The protein is TATA-binding protein 2 (TBP2) of Oryza sativa subsp. japonica (Rice).